The sequence spans 287 residues: MKIRIAVPSKGRISEPAIRLLENAGVGLKDTVNRKLFSKTQHPQIEVMFSRAADIPEFVADGAADLGITGYDLIVERGSDVEILEDLKYGRASLVLAAPEDSTIRGPEDIPRGAVIATEFPGITENYLREHGIDAEVVELTGSTEIAPFIGVADLITDLSSTGTTLRMNHLRVIDTILESSVKLIANRESYATKSGIIEELRTGIRGVIDAEGKRLVMLNIDRKNLDRVRALMPGMTGPTVSEVLSDNGVVAVHAVVDEKEVFNLINRLKAVGARDILVVPIERIIP.

Belongs to the ATP phosphoribosyltransferase family. Long subfamily. Mg(2+) serves as cofactor.

The protein resides in the cytoplasm. It carries out the reaction 1-(5-phospho-beta-D-ribosyl)-ATP + diphosphate = 5-phospho-alpha-D-ribose 1-diphosphate + ATP. Its pathway is amino-acid biosynthesis; L-histidine biosynthesis; L-histidine from 5-phospho-alpha-D-ribose 1-diphosphate: step 1/9. With respect to regulation, feedback inhibited by histidine. In terms of biological role, catalyzes the condensation of ATP and 5-phosphoribose 1-diphosphate to form N'-(5'-phosphoribosyl)-ATP (PR-ATP). Has a crucial role in the pathway because the rate of histidine biosynthesis seems to be controlled primarily by regulation of HisG enzymatic activity. The protein is ATP phosphoribosyltransferase (hisG) of Methanothermobacter thermautotrophicus (strain ATCC 29096 / DSM 1053 / JCM 10044 / NBRC 100330 / Delta H) (Methanobacterium thermoautotrophicum).